The following is a 350-amino-acid chain: Histidinol-phosphate aminotransferase (350 aa).

Position 207 is an N6-(pyridoxal phosphate)lysine (Lys207).

The protein belongs to the class-II pyridoxal-phosphate-dependent aminotransferase family. Histidinol-phosphate aminotransferase subfamily. In terms of assembly, homodimer. Requires pyridoxal 5'-phosphate as cofactor.

It carries out the reaction L-histidinol phosphate + 2-oxoglutarate = 3-(imidazol-4-yl)-2-oxopropyl phosphate + L-glutamate. It participates in amino-acid biosynthesis; L-histidine biosynthesis; L-histidine from 5-phospho-alpha-D-ribose 1-diphosphate: step 7/9. This chain is Histidinol-phosphate aminotransferase, found in Streptococcus thermophilus (strain ATCC BAA-491 / LMD-9).